A 151-amino-acid chain; its full sequence is Deoxyuridine 5'-triphosphate nucleotidohydrolase (151 aa).

Residues 70–72, Asn-83, 87–89, and Met-97 contribute to the substrate site; these read RSG and LID.

This sequence belongs to the dUTPase family. The cofactor is Mg(2+).

The catalysed reaction is dUTP + H2O = dUMP + diphosphate + H(+). Its pathway is pyrimidine metabolism; dUMP biosynthesis; dUMP from dCTP (dUTP route): step 2/2. Its function is as follows. This enzyme is involved in nucleotide metabolism: it produces dUMP, the immediate precursor of thymidine nucleotides and it decreases the intracellular concentration of dUTP so that uracil cannot be incorporated into DNA. This is Deoxyuridine 5'-triphosphate nucleotidohydrolase from Pseudomonas syringae pv. tomato (strain ATCC BAA-871 / DC3000).